The following is a 108-amino-acid chain: UPF0060 membrane protein amb3269 (108 aa).

Helical transmembrane passes span 4–24, 31–51, 59–79, and 85–105; these read IPTY…FWAW, PLWL…LTRI, AYAA…WAVE, and RWDT…IFGP.

Belongs to the UPF0060 family.

It is found in the cell inner membrane. The protein is UPF0060 membrane protein amb3269 of Paramagnetospirillum magneticum (strain ATCC 700264 / AMB-1) (Magnetospirillum magneticum).